A 35-amino-acid polypeptide reads, in one-letter code: Photosystem II reaction center protein T (35 aa).

The helical transmembrane segment at 3–23 (ALVYTFLLVSTLGIIFFAIFF) threads the bilayer.

This sequence belongs to the PsbT family. PSII is composed of 1 copy each of membrane proteins PsbA, PsbB, PsbC, PsbD, PsbE, PsbF, PsbH, PsbI, PsbJ, PsbK, PsbL, PsbM, PsbT, PsbY, PsbZ, Psb30/Ycf12, at least 3 peripheral proteins of the oxygen-evolving complex and a large number of cofactors. It forms dimeric complexes.

The protein resides in the plastid. It localises to the chloroplast thylakoid membrane. Found at the monomer-monomer interface of the photosystem II (PS II) dimer, plays a role in assembly and dimerization of PSII. PSII is a light-driven water plastoquinone oxidoreductase, using light energy to abstract electrons from H(2)O, generating a proton gradient subsequently used for ATP formation. The sequence is that of Photosystem II reaction center protein T from Suaeda aralocaspica (Seablite).